The following is a 60-amino-acid chain: Cytochrome c oxidase assembly protein COX14 homolog (60 aa).

The helical transmembrane segment at 10-32 (VGYRLFSGSMMLLTVYGGYLCVV) threads the bilayer.

The protein resides in the mitochondrion membrane. In terms of biological role, plays a role in the assembly or stability of the cytochrome c oxidase complex (COX). The polypeptide is Cytochrome c oxidase assembly protein COX14 homolog (Danio rerio (Zebrafish)).